Reading from the N-terminus, the 120-residue chain is MNQLIQLVESSLGANRFEQVRPGDTVKIQLRVIEGEKERLQAFEGVVISDRGEGGSKTITVRKISHGVGVERIIPVNSPNIESVTVLRHGRARRAKLFYLRKRTGKAALKVKERKTQVNA.

The protein belongs to the bacterial ribosomal protein bL19 family.

Functionally, this protein is located at the 30S-50S ribosomal subunit interface and may play a role in the structure and function of the aminoacyl-tRNA binding site. The chain is Large ribosomal subunit protein bL19 from Chlorobium chlorochromatii (strain CaD3).